Consider the following 454-residue polypeptide: Trigger factor (454 aa).

The region spanning 169 to 261 (GDVAIADYEG…LKELKSRELP (93 aa)) is the PPIase FKBP-type domain.

It belongs to the FKBP-type PPIase family. Tig subfamily.

It is found in the cytoplasm. It carries out the reaction [protein]-peptidylproline (omega=180) = [protein]-peptidylproline (omega=0). Its function is as follows. Involved in protein export. Acts as a chaperone by maintaining the newly synthesized protein in an open conformation. Functions as a peptidyl-prolyl cis-trans isomerase. This Picosynechococcus sp. (strain ATCC 27264 / PCC 7002 / PR-6) (Agmenellum quadruplicatum) protein is Trigger factor.